Consider the following 347-residue polypeptide: L-Ala-D/L-amino acid epimerase (347 aa).

156-158 (KLK) serves as a coordination point for substrate. Mg(2+) contacts are provided by Asp-183, Glu-211, and Asp-237. Residues Lys-259 and 309–311 (DID) contribute to the substrate site.

The protein belongs to the mandelate racemase/muconate lactonizing enzyme family. Requires Mg(2+) as cofactor.

Functionally, dipeptide epimerase with a broad substrate specificity. Catalyzes the epimerization of L-Ala-L-Ala, L-Ala-L-Ser, L-Ala-L-Thr, L-Ala-L-Met, L-Ala-L-Phe, L-Ala-L-Tyr, L-Gly-L-Asp, L-Val-L-Asp, L-Val-L-Glu and L-Val-L-Phe (in vitro). Can also catalyze the epimerization of L-Ala-L-Glu, but with lower efficiency. The chain is L-Ala-D/L-amino acid epimerase from Pedosphaera parvula (strain Ellin514).